The chain runs to 124 residues: Large ribosomal subunit protein bL21 (124 aa).

The disordered stretch occupies residues 105–124 (NAPSIGPRVRKAKPAAEAAE).

Belongs to the bacterial ribosomal protein bL21 family. In terms of assembly, part of the 50S ribosomal subunit. Contacts protein L20.

Functionally, this protein binds to 23S rRNA in the presence of protein L20. The chain is Large ribosomal subunit protein bL21 from Rhodopseudomonas palustris (strain BisA53).